The chain runs to 394 residues: Phosphopentomutase (394 aa).

Positions 13, 286, 291, 327, 328, and 339 each coordinate Mn(2+).

Belongs to the phosphopentomutase family. Mn(2+) is required as a cofactor.

The protein localises to the cytoplasm. The enzyme catalyses 2-deoxy-alpha-D-ribose 1-phosphate = 2-deoxy-D-ribose 5-phosphate. It carries out the reaction alpha-D-ribose 1-phosphate = D-ribose 5-phosphate. It functions in the pathway carbohydrate degradation; 2-deoxy-D-ribose 1-phosphate degradation; D-glyceraldehyde 3-phosphate and acetaldehyde from 2-deoxy-alpha-D-ribose 1-phosphate: step 1/2. Its function is as follows. Isomerase that catalyzes the conversion of deoxy-ribose 1-phosphate (dRib-1-P) and ribose 1-phosphate (Rib-1-P) to deoxy-ribose 5-phosphate (dRib-5-P) and ribose 5-phosphate (Rib-5-P), respectively. This Bacillus thuringiensis (strain Al Hakam) protein is Phosphopentomutase.